The sequence spans 222 residues: DNA ADP-ribosyl transferase (222 aa).

A DarT domain is found at 12–209; that stretch reads TLIYHITHLN…PVRVRRSWYY (198 aa). Residues 16-18, Gly-25, and Leu-33 each bind NAD(+); that span reads HIT. The tract at residues 38 to 56 is NAD(+)-binding element; the sequence is RPPTQQNVAYGHIQAHRAQ. Residues 47–53 mediate DNA binding; it reads YGHIQAH. Arg-54 serves as a coordination point for NAD(+). Residue Arg-54 is the Proton acceptor of the active site. 3 DNA-binding regions span residues 78–83, 148–151, and 154–158; these read RSPMLY, SYWA, and REKKQ. An ADP-ribosylating turn-turn loop region spans residues 119 to 160; it reads TDRHAAVQYVCFFHKLEHLKALDWQAIQASYWANVREKKQAE. Residue Glu-160 is part of the active site.

The protein belongs to the DarT ADP-ribosyltransferase family. Interacts with cognate antitoxin DarG (via C-terminus); this heterodimeric complex neutralizes the toxic effect of DarT by preventing ssDNA binding to DarT and consequently inactivating the toxin by direct protein-protein interactions.

The enzyme catalyses a thymidine in DNA + NAD(+) = an N-(ADP-alpha-D-ribosyl)-thymidine in DNA + nicotinamide + H(+). Its function is as follows. Toxic component of the hybrid type II/IV toxin-antitoxin (TA) system DarTG, which plays a crucial role in controlling bacterial growth and bacteriophage infection. Its toxic effect is neutralized by cognate antitoxin DarG. In case of phage infection, DarT toxin ADP-ribosylates DNA, which inhibits both viral DNA and RNA synthesis and leads to abortive infection. ADP-ribosylates ssDNA on the second thymidine of the consensus sequence 5'-TNTC-3'; the protein does not auto-modify. Has no activity on dsDNA in vitro. This leads to a decrease in DNA replication. Upon expression in E.coli inhibits cell growth, colony formation and induces the SOS response. Expression leads to bacteriostasis; however if cells grow over an hour in the presence of toxin, growth is no longer restored on antitoxin-inducing plates. In E.coli ADP-ribosylates genomic DNA (gDNA), which induces RecA expression (a marker for DNA damage). This Thermus aquaticus (strain ATCC BAA-2747 / Y51MC23) protein is DNA ADP-ribosyl transferase.